The following is a 158-amino-acid chain: Protein-export protein SecB (158 aa).

It belongs to the SecB family. As to quaternary structure, homotetramer, a dimer of dimers. One homotetramer interacts with 1 SecA dimer.

It localises to the cytoplasm. Functionally, one of the proteins required for the normal export of preproteins out of the cell cytoplasm. It is a molecular chaperone that binds to a subset of precursor proteins, maintaining them in a translocation-competent state. It also specifically binds to its receptor SecA. The protein is Protein-export protein SecB of Rhodopseudomonas palustris (strain BisB5).